The following is a 438-amino-acid chain: Transposon Ty2-OR2 Gag polyprotein (438 aa).

Disordered regions lie at residues 1 to 88 (MESQ…YQQH), 365 to 397 (NVSRTSPNTTNTKVTTRNYHRTNSSKPRAAKAH), and 419 to 438 (SSQYLSDDNELSLRPATERI). Composition is skewed to polar residues over residues 19–39 (ASVTSKEVPSNQDPLAVSASN) and 49–60 (KVNSQEETTPGT). The interval 295–397 (ENNINVSDRL…SSKPRAAKAH (103 aa)) is RNA-binding. The span at 369–381 (TSPNTTNTKVTTR) shows a compositional bias: low complexity.

Homotrimer.

The protein resides in the cytoplasm. Functionally, capsid protein (CA) is the structural component of the virus-like particle (VLP), forming the shell that encapsulates the retrotransposons dimeric RNA genome. The particles are assembled from trimer-clustered units and there are holes in the capsid shells that allow for the diffusion of macromolecules. CA also has nucleocapsid-like chaperone activity, promoting primer tRNA(i)-Met annealing to the multipartite primer-binding site (PBS), dimerization of Ty2 RNA and initiation of reverse transcription. This chain is Transposon Ty2-OR2 Gag polyprotein (TY2A-OR2), found in Saccharomyces cerevisiae (strain ATCC 204508 / S288c) (Baker's yeast).